Here is a 518-residue protein sequence, read N- to C-terminus: MLRVVSWNINGIRRPLQGVANQEPSNCAAVAVGRILDELDADIVCLQETKVTRDALTEPLAIVEGYNSYFSFSRNRSGYSGVATFCKDNATPVAAEEGLSGLFATQNGDVGCYGNMDEFTQEELRALDSEGRALLTQHKIRTWEGKEKTLTLINVYCPHADPGRPERLVFKMRFYRLLQIRAEALLAAGSHVIILGDLNTAHRPIDHWDAVNLECFEEDPGRKWMDSLLSNLGCQSASHVGPFIDSYRCFQPKQEGAFTCWSAVTGARHLNYGSRLDYVLGDRTLVIDTFQASFLLPEVMGSDHCPVGAVLSVSSVPAKQCPPLCTRFLPEFAGTQLKILRFLVPLEQSPVLEQSTLQHNNQTRVQTCQNKAQVRSTRPQPSQVGSSRGQKNLKSYFQPSPSCPQASPDIELPSLPLMSALMTPKTPEEKAVAKVVKGQAKTSEAKDEKELRTSFWKSVLAGPLRTPLCGGHREPCVMRTVKKPGPNLGRRFYMCARPRGPPTDPSSRCNFFLWSRPS.

Residues Asn8 and Glu48 each contribute to the Mg(2+) site. Tyr156 is an active-site residue. Positions 197, 199, 303, and 304 each coordinate Mg(2+). Asp197 serves as the catalytic Proton donor/acceptor. The Proton acceptor role is filled by His304. Residues 355-405 show a composition bias toward polar residues; that stretch reads STLQHNNQTRVQTCQNKAQVRSTRPQPSQVGSSRGQKNLKSYFQPSPSCPQ. The tract at residues 355 to 407 is disordered; it reads STLQHNNQTRVQTCQNKAQVRSTRPQPSQVGSSRGQKNLKSYFQPSPSCPQAS. Lys371 participates in a covalent cross-link: Glycyl lysine isopeptide (Lys-Gly) (interchain with G-Cter in ubiquitin). The interval 390 to 397 is required for the interaction and colocalization with PCNA in nuclear foci in presence of oxidative-induced DNA damaging agents; that stretch reads QKNLKSYF. Zn(2+) contacts are provided by Cys469, His472, Cys495, and Cys509. Residues 469–518 form a GRF-type zinc finger; the sequence is CGGHREPCVMRTVKKPGPNLGRRFYMCARPRGPPTDPSSRCNFFLWSRPS.

It belongs to the DNA repair enzymes AP/ExoA family. As to quaternary structure, interacts with PCNA; this interaction is triggered by reactive oxygen species and increased by misincorporation of uracil in nuclear DNA. The cofactor is Mg(2+). Requires Mn(2+) as cofactor. In terms of processing, ubiquitinated by the CUL9-RBX1 complex. Ubiquitinated by MKRN3 at Lys-371 leading to proteasomal degradation. In terms of tissue distribution, highly expressed in brain and kidney. Weakly expressed in the fetal brain.

Its subcellular location is the nucleus. The protein resides in the cytoplasm. It is found in the mitochondrion. The catalysed reaction is Exonucleolytic cleavage in the 3'- to 5'-direction to yield nucleoside 5'-phosphates.. 3'-5' exonuclease activity is activated by sodium and manganese. 3'-5' exonuclease and 3'-phosphodiesterase activities are stimulated in presence of PCNA. Functionally, functions as a weak apurinic/apyrimidinic (AP) endodeoxyribonuclease in the DNA base excision repair (BER) pathway of DNA lesions induced by oxidative and alkylating agents. Initiates repair of AP sites in DNA by catalyzing hydrolytic incision of the phosphodiester backbone immediately adjacent to the damage, generating a single-strand break with 5'-deoxyribose phosphate and 3'-hydroxyl ends. Also displays double-stranded DNA 3'-5' exonuclease, 3'-phosphodiesterase activities. Shows robust 3'-5' exonuclease activity on 3'-recessed heteroduplex DNA and is able to remove mismatched nucleotides preferentially. Also exhibits 3'-5' exonuclease activity on a single nucleotide gap containing heteroduplex DNA and on blunt-ended substrates. Shows fairly strong 3'-phosphodiesterase activity involved in the removal of 3'-damaged termini formed in DNA by oxidative agents. In the nucleus functions in the PCNA-dependent BER pathway. Plays a role in reversing blocked 3' DNA ends, problematic lesions that preclude DNA synthesis. Required for somatic hypermutation (SHM) and DNA cleavage step of class switch recombination (CSR) of immunoglobulin genes. Required for proper cell cycle progression during proliferation of peripheral lymphocytes. In Homo sapiens (Human), this protein is DNA-(apurinic or apyrimidinic site) endonuclease 2 (APEX2).